A 1902-amino-acid chain; its full sequence is PI-type proteinase (1902 aa).

A signal peptide spans 1-33 (MQRKKKGLSILLAGTVALGALAVLPVGEIQAKA). The propeptide occupies 34 to 187 (AISQQTKGSS…VTLAKVYYPT (154 aa)). One can recognise a Peptidase S8 domain in the interval 191-697 (ANSMANVQAV…AGLVDVKAAI (507 aa)). Residues Asp-217, His-281, and Ser-620 each act as charge relay system in the active site. The disordered stretch occupies residues 1796 to 1874 (GKGDGTTGTS…GALPKTGETT (79 aa)). The span at 1797–1812 (KGDGTTGTSDKGGGQG) shows a compositional bias: gly residues. Residues 1830-1843 (SQPSSGGNIPTNPA) show a composition bias toward polar residues. The LPXTG sorting signal motif lies at 1867–1871 (LPKTG). Thr-1870 is subject to Pentaglycyl murein peptidoglycan amidated threonine. A propeptide spans 1871-1902 (GETTERPAFGFLGVIVVILMGVLGLKRKQREE) (removed by sortase).

It belongs to the peptidase S8 family.

It is found in the secreted. It localises to the cell wall. It catalyses the reaction Endopeptidase activity with very broad specificity, although some subsite preference have been noted, e.g. large hydrophobic residues in the P1 and P4 positions, and Pro in the P2 position. Best known for its action on caseins, although it has been shown to hydrolyze hemoglobin and oxidized insulin B-chain.. Protease which breaks down milk proteins during the growth of the bacteria on milk. This Lactococcus lactis subsp. cremoris (Streptococcus cremoris) protein is PI-type proteinase (prtP).